The following is a 453-amino-acid chain: Glutamyl-tRNA reductase (453 aa).

Residues 49 to 52, serine 109, 114 to 116, and glutamine 120 contribute to the substrate site; these read TCNR and EQQ. The Nucleophile role is filled by cysteine 50. An NADP(+)-binding site is contributed by 191 to 196; sequence GAGSMG. Residues 432–453 form a disordered region; sequence PAAVATPTDLVDGDRTGRDLQA. Residues 443–453 show a composition bias toward basic and acidic residues; sequence DGDRTGRDLQA.

Belongs to the glutamyl-tRNA reductase family. As to quaternary structure, homodimer.

The catalysed reaction is (S)-4-amino-5-oxopentanoate + tRNA(Glu) + NADP(+) = L-glutamyl-tRNA(Glu) + NADPH + H(+). Its pathway is porphyrin-containing compound metabolism; protoporphyrin-IX biosynthesis; 5-aminolevulinate from L-glutamyl-tRNA(Glu): step 1/2. Its function is as follows. Catalyzes the NADPH-dependent reduction of glutamyl-tRNA(Glu) to glutamate 1-semialdehyde (GSA). The polypeptide is Glutamyl-tRNA reductase (Rhodococcus erythropolis (strain PR4 / NBRC 100887)).